The primary structure comprises 503 residues: Maturase K (503 aa).

The protein belongs to the intron maturase 2 family. MatK subfamily.

It is found in the plastid. It localises to the chloroplast. In terms of biological role, usually encoded in the trnK tRNA gene intron. Probably assists in splicing its own and other chloroplast group II introns. The chain is Maturase K from Rosa acicularis (Prickly rose).